The chain runs to 201 residues: Small ribosomal subunit protein uS4 (201 aa).

Positions 26-48 (LSKKNYPPGQHGNSRKRKTSEYG) are disordered. In terms of domain architecture, S4 RNA-binding spans 92 to 155 (GRLDNVVFRL…KSLEVIANSL (64 aa)).

The protein belongs to the universal ribosomal protein uS4 family. As to quaternary structure, part of the 30S ribosomal subunit. Contacts protein S5. The interaction surface between S4 and S5 is involved in control of translational fidelity.

In terms of biological role, one of the primary rRNA binding proteins, it binds directly to 16S rRNA where it nucleates assembly of the body of the 30S subunit. Functionally, with S5 and S12 plays an important role in translational accuracy. The polypeptide is Small ribosomal subunit protein uS4 (Bacteroides thetaiotaomicron (strain ATCC 29148 / DSM 2079 / JCM 5827 / CCUG 10774 / NCTC 10582 / VPI-5482 / E50)).